We begin with the raw amino-acid sequence, 300 residues long: N-acetylmuramic acid 6-phosphate etherase (300 aa).

The SIS domain maps to 57 to 220 (ITHAFAHGGR…TSGAMIRSGK (164 aa)). The active-site Proton donor is the glutamate 85. Residue glutamate 116 is part of the active site.

The protein belongs to the GCKR-like family. MurNAc-6-P etherase subfamily. Homodimer.

It catalyses the reaction N-acetyl-D-muramate 6-phosphate + H2O = N-acetyl-D-glucosamine 6-phosphate + (R)-lactate. Its pathway is amino-sugar metabolism; 1,6-anhydro-N-acetylmuramate degradation. It functions in the pathway amino-sugar metabolism; N-acetylmuramate degradation. The protein operates within cell wall biogenesis; peptidoglycan recycling. Specifically catalyzes the cleavage of the D-lactyl ether substituent of MurNAc 6-phosphate, producing GlcNAc 6-phosphate and D-lactate. Together with AnmK, is also required for the utilization of anhydro-N-acetylmuramic acid (anhMurNAc) either imported from the medium or derived from its own cell wall murein, and thus plays a role in cell wall recycling. The polypeptide is N-acetylmuramic acid 6-phosphate etherase (Vibrio vulnificus (strain CMCP6)).